Here is a 66-residue protein sequence, read N- to C-terminus: Large ribosomal subunit protein bL35 (66 aa).

The span at 1-26 (MPKMKTHRGSAKRFKKTGSGKLKRSH) shows a compositional bias: basic residues. Residues 1-48 (MPKMKTHRGSAKRFKKTGSGKLKRSHAYTSHLFANKSQKQKRKLRKSA) are disordered.

It belongs to the bacterial ribosomal protein bL35 family. In terms of assembly, part of the 50S ribosomal subunit.

This Bacillus subtilis (strain 168) protein is Large ribosomal subunit protein bL35.